Reading from the N-terminus, the 364-residue chain is tRNA 2-selenouridine synthase (364 aa).

Residues 14 to 137 (LIADTPIIDV…LRQTAIQATI (124 aa)) enclose the Rhodanese domain. The active-site S-selanylcysteine intermediate is the Cys-97.

The protein belongs to the SelU family. As to quaternary structure, monomer.

It carries out the reaction 5-methylaminomethyl-2-thiouridine(34) in tRNA + selenophosphate + (2E)-geranyl diphosphate + H2O + H(+) = 5-methylaminomethyl-2-selenouridine(34) in tRNA + (2E)-thiogeraniol + phosphate + diphosphate. The catalysed reaction is 5-methylaminomethyl-2-thiouridine(34) in tRNA + (2E)-geranyl diphosphate = 5-methylaminomethyl-S-(2E)-geranyl-thiouridine(34) in tRNA + diphosphate. It catalyses the reaction 5-methylaminomethyl-S-(2E)-geranyl-thiouridine(34) in tRNA + selenophosphate + H(+) = 5-methylaminomethyl-2-(Se-phospho)selenouridine(34) in tRNA + (2E)-thiogeraniol. The enzyme catalyses 5-methylaminomethyl-2-(Se-phospho)selenouridine(34) in tRNA + H2O = 5-methylaminomethyl-2-selenouridine(34) in tRNA + phosphate. Its function is as follows. Involved in the post-transcriptional modification of the uridine at the wobble position (U34) of tRNA(Lys), tRNA(Glu) and tRNA(Gln). Catalyzes the conversion of 2-thiouridine (S2U-RNA) to 2-selenouridine (Se2U-RNA). Acts in a two-step process involving geranylation of 2-thiouridine (S2U) to S-geranyl-2-thiouridine (geS2U) and subsequent selenation of the latter derivative to 2-selenouridine (Se2U) in the tRNA chain. The sequence is that of tRNA 2-selenouridine synthase from Escherichia coli O17:K52:H18 (strain UMN026 / ExPEC).